A 195-amino-acid chain; its full sequence is MKEIHVILSGGLSRRFGEPKAFARWKGKPLYQWCKQALGDDVLILSRPGLTERFIELGEKAVLEDIEPYRGKGPLAGMYTAMERAEGECYIFSACDTPLVRQETISALKRQLTPADDAVVPVADGRAQPLVAVYHRRVKSVLHEQLQQNELKISSFLDRIRVKYIEADAVGAEPWEFINVNKKSDLEEIEPFFPG.

GTP contacts are provided by residues 8–10 (LSG), K20, D65, and D96. A Mg(2+)-binding site is contributed by D96.

It belongs to the MobA family. Mg(2+) serves as cofactor.

The protein resides in the cytoplasm. It catalyses the reaction Mo-molybdopterin + GTP + H(+) = Mo-molybdopterin guanine dinucleotide + diphosphate. Transfers a GMP moiety from GTP to Mo-molybdopterin (Mo-MPT) cofactor (Moco or molybdenum cofactor) to form Mo-molybdopterin guanine dinucleotide (Mo-MGD) cofactor. This is Probable molybdenum cofactor guanylyltransferase from Bacillus licheniformis (strain ATCC 14580 / DSM 13 / JCM 2505 / CCUG 7422 / NBRC 12200 / NCIMB 9375 / NCTC 10341 / NRRL NRS-1264 / Gibson 46).